The primary structure comprises 57 residues: uncharacterized protein (57 aa).

A compositionally biased stretch (basic and acidic residues) spans 1–10 (MKRSRTEVGR). The segment at 1–25 (MKRSRTEVGRWRMQRQASRRKSRWL) is disordered.

Belongs to the YciY family.

This is an uncharacterized protein from Escherichia coli O1:K1 / APEC.